A 134-amino-acid polypeptide reads, in one-letter code: Small ribosomal subunit protein bS6 (134 aa).

A disordered region spans residues 97–134 (TDVSPIKASEGREDRRSAPQREERNHDNSDEVSEESED). The span at 105 to 125 (SEGREDRRSAPQREERNHDNS) shows a compositional bias: basic and acidic residues.

It belongs to the bacterial ribosomal protein bS6 family.

Functionally, binds together with bS18 to 16S ribosomal RNA. The sequence is that of Small ribosomal subunit protein bS6 from Marinomonas sp. (strain MWYL1).